Here is a 300-residue protein sequence, read N- to C-terminus: 3-hydroxy-3-isohexenylglutaryl-CoA/hydroxy-methylglutaryl-CoA lyase (300 aa).

The region spanning 7–274 is the Pyruvate carboxyltransferase domain; sequence VRLVEVGPRD…HTGVDMHALV (268 aa). Arginine 15 provides a ligand contact to substrate. A divalent metal cation contacts are provided by aspartate 16, histidine 207, and histidine 209. Cysteine 240 is a catalytic residue. Residue asparagine 249 coordinates a divalent metal cation.

Belongs to the HMG-CoA lyase family. Homodimer. The cofactor is Mg(2+). Requires Mn(2+) as cofactor.

The enzyme catalyses 3-hydroxy-3-(4-methylpent-3-en-1-yl)glutaryl-CoA = 7-methyl-3-oxooct-6-enoyl-CoA + acetate. It carries out the reaction (3S)-3-hydroxy-3-methylglutaryl-CoA = acetoacetate + acetyl-CoA. Its pathway is metabolic intermediate metabolism; (S)-3-hydroxy-3-methylglutaryl-CoA degradation; acetoacetate from (S)-3-hydroxy-3-methylglutaryl-CoA: step 1/1. Involved in the L-leucine, isovalerate and acyclic monoterpene catabolism. Catalyzes the cleavage of 3-hydroxy-3-methylglutaryl-CoA (HMG-CoA) to yield acetyl-CoA and acetoacetate. It can also catalyze the cleavage of 3-hydroxy-3-isohexenylglutaryl-CoA (HIHG_CoA) to yield 7-methyl-3-oxooct-6-enoyl-CoA and acetate. The chain is 3-hydroxy-3-isohexenylglutaryl-CoA/hydroxy-methylglutaryl-CoA lyase from Pseudomonas aeruginosa (strain ATCC 15692 / DSM 22644 / CIP 104116 / JCM 14847 / LMG 12228 / 1C / PRS 101 / PAO1).